The primary structure comprises 127 residues: Fluoride-specific ion channel FluC (127 aa).

4 consecutive transmembrane segments (helical) span residues 4-24 (SILAIALGAALGALLRWFLGL), 36-56 (GTLLANLVGGYAIGAAIAYFA), 68-88 (LIITGFCGGLTTFSTFSAEVV), and 99-119 (AAGAIATHVGGSLLMTLLGLF). Positions 75 and 78 each coordinate Na(+).

The protein belongs to the fluoride channel Fluc/FEX (TC 1.A.43) family.

The protein localises to the cell inner membrane. The catalysed reaction is fluoride(in) = fluoride(out). With respect to regulation, na(+) is not transported, but it plays an essential structural role and its presence is essential for fluoride channel function. Fluoride-specific ion channel. Important for reducing fluoride concentration in the cell, thus reducing its toxicity. The chain is Fluoride-specific ion channel FluC from Pseudomonas paraeruginosa (strain DSM 24068 / PA7) (Pseudomonas aeruginosa (strain PA7)).